Consider the following 315-residue polypeptide: Ribonuclease Z (315 aa).

Zn(2+) is bound by residues histidine 62, histidine 64, aspartate 66, histidine 67, histidine 144, aspartate 215, and histidine 273. Aspartate 66 serves as the catalytic Proton acceptor.

This sequence belongs to the RNase Z family. As to quaternary structure, homodimer. Zn(2+) is required as a cofactor.

It carries out the reaction Endonucleolytic cleavage of RNA, removing extra 3' nucleotides from tRNA precursor, generating 3' termini of tRNAs. A 3'-hydroxy group is left at the tRNA terminus and a 5'-phosphoryl group is left at the trailer molecule.. Functionally, zinc phosphodiesterase, which displays some tRNA 3'-processing endonuclease activity. Probably involved in tRNA maturation, by removing a 3'-trailer from precursor tRNA. This chain is Ribonuclease Z, found in Synechococcus sp. (strain CC9311).